A 304-amino-acid polypeptide reads, in one-letter code: GTPase Era (304 aa).

The Era-type G domain occupies 9–177 (HSGFVAIVGR…VTTLSQHMPE (169 aa)). The tract at residues 17–24 (GRPNVGKS) is G1. A GTP-binding site is contributed by 17-24 (GRPNVGKS). Residues 43–47 (QTTRN) form a G2 region. Residues 64-67 (DTPG) form a G3 region. Residues 64–68 (DTPGI) and 127–130 (NKID) each bind GTP. The tract at residues 127-130 (NKID) is G4. Residues 156–158 (ISA) form a G5 region. The KH type-2 domain maps to 208–285 (TRQEVPHSVA…YLELWVKVSE (78 aa)).

It belongs to the TRAFAC class TrmE-Era-EngA-EngB-Septin-like GTPase superfamily. Era GTPase family. In terms of assembly, monomer.

It localises to the cytoplasm. It is found in the cell membrane. In terms of biological role, an essential GTPase that binds both GDP and GTP, with rapid nucleotide exchange. Plays a role in 16S rRNA processing and 30S ribosomal subunit biogenesis and possibly also in cell cycle regulation and energy metabolism. The polypeptide is GTPase Era (Pediococcus pentosaceus (strain ATCC 25745 / CCUG 21536 / LMG 10740 / 183-1w)).